We begin with the raw amino-acid sequence, 229 residues long: 23 kDa piroplasm membrane protein (229 aa).

A signal peptide spans 1-19; that stretch reads MNKYFKVFFFVLLTHALKS. Over 20–203 the chain is Extracellular; the sequence is ALIFGQATLQ…EKEDTNKKKY (184 aa). A helical transmembrane segment spans residues 204-224; the sequence is VLMVVVVVVFVVVASLVVFLV. Over 225-229 the chain is Cytoplasmic; that stretch reads KFCLK.

Its subcellular location is the membrane. The sequence is that of 23 kDa piroplasm membrane protein from Theileria parva (East coast fever infection agent).